The primary structure comprises 412 residues: N-carbamoyl-L-amino-acid amidohydrolase (412 aa).

A divalent metal cation contacts are provided by H82, D93, E128, and H193. Residues Q196, H229, N278, R291, and G360 each contribute to the an N-carbamoyl-L-alpha-amino acid site. Residues 212-330 (SIVGVRALRV…DVDEFFNLSP (119 aa)) form an involved in dimerization region. An a divalent metal cation-binding site is contributed by H385.

It belongs to the peptidase M20 family. In terms of assembly, homodimer. The cofactor is Mn(2+). Requires Ni(2+) as cofactor. It depends on Co(2+) as a cofactor. Fe(2+) is required as a cofactor.

It catalyses the reaction an N-carbamoyl-L-alpha-amino acid + H2O + 2 H(+) = an L-alpha-amino acid + NH4(+) + CO2. The enzyme catalyses N-carbamoyl-L-tryptophan + H2O + 2 H(+) = L-tryptophan + NH4(+) + CO2. The catalysed reaction is N-carbamoyl-L-tyrosine + H2O + 2 H(+) = L-tyrosine + NH4(+) + CO2. It carries out the reaction N-carbamoyl-L-phenylalanine + H2O + 2 H(+) = L-phenylalanine + NH4(+) + CO2. Its function is as follows. Catalyzes the hydrolysis of aliphatic N-carbamoyl-L-alpha-amino acids to free L-alpha-amino acids. Is strictly L-specific since it is inactive toward N-carbamoyl-D-alpha-amino acids. Shows a preference for aromatic N-carbamoyl-L-alpha-amino acids, such as N-carbamoyl-L-tryptophan and N-carbamoyl-L-tyrosine and, to a lesser extent, N-carbamoyl-L-phenylalanine and the non-natural amino acid N-carbamoyl-L-thienylalanine. Carbamoyl derivatives of beta-alanine and charged aliphatic amino acids are not accepted as substrates. The protein is N-carbamoyl-L-amino-acid amidohydrolase of Paenarthrobacter aurescens (Arthrobacter aurescens).